An 87-amino-acid chain; its full sequence is Toxin RelG (87 aa).

The protein belongs to the RelE toxin family. In terms of assembly, interacts with cognate antitoxin RelF, which neutralizes the toxin. Also interacts with non-cognate antitoxin RelB in vitro, in M.smegmatis this neutralizes the toxicity of this toxin.

In terms of biological role, toxic component of a type II toxin-antitoxin (TA) system. Has RNase activity and preferentially cleaves at the 3'-end of purine ribonucleotides. Overexpression in M.tuberculosis or M.smegmatis inhibits colony formation in a bacteriostatic rather than bacteriocidal fashion. Its toxic effect is neutralized by coexpression with cognate antitoxin RelB2 (shown only for M.smegmatis). Overexpression also increases the number of gentamicin-tolerant and levofloxacin-tolerant persister cells. In combination with cognate antitoxin RelF represses its own promoter. Has been seen to bind DNA in complex with antitoxin RelF but not alone. This chain is Toxin RelG (relG), found in Mycobacterium tuberculosis (strain ATCC 25618 / H37Rv).